An 84-amino-acid polypeptide reads, in one-letter code: Conotoxin Tx8.1 (84 aa).

The first 19 residues, 1–19, serve as a signal peptide directing secretion; the sequence is LKMGAMFVLLLLFTLASSH. Positions 20–44 are excised as a propeptide; that stretch reads REGDIQARKTHLKSDFYRTLPRFAR.

It belongs to the conotoxin S superfamily. In terms of processing, contains 5 disulfide bonds. Expressed by the venom duct.

It is found in the secreted. The protein is Conotoxin Tx8.1 of Conus textile (Cloth-of-gold cone).